Here is a 181-residue protein sequence, read N- to C-terminus: Caveolin-1 (181 aa).

Residues 1 to 107 (MTGGLRDGEK…TKYWCYRLLT (107 aa)) lie on the Cytoplasmic side of the membrane. Positions 108 to 128 (ALVGIPLALIWGIFFAILSFI) form an intramembrane region, helical. The Cytoplasmic portion of the chain corresponds to 129 to 181 (HIWAVVPCVKSYLIEIHCISRVYSICVHTFCDPLFEAMGKCLGGVRIRTSKEV). 3 S-palmitoyl cysteine lipidation sites follow: Cys136, Cys146, and Cys159.

Belongs to the caveolin family. Homooligomer.

It is found in the golgi apparatus membrane. The protein resides in the cell membrane. It localises to the membrane. Its subcellular location is the caveola. The protein localises to the membrane raft. May act as a positive regulator of T-cell coactivation. May act as a scaffolding protein within caveolar membranes. Interacts directly with G-protein alpha subunits and can functionally regulate their activity. This Takifugu rubripes (Japanese pufferfish) protein is Caveolin-1 (cav1).